The primary structure comprises 228 residues: 2-C-methyl-D-erythritol 4-phosphate cytidylyltransferase (228 aa).

The protein belongs to the IspD/TarI cytidylyltransferase family. IspD subfamily.

It catalyses the reaction 2-C-methyl-D-erythritol 4-phosphate + CTP + H(+) = 4-CDP-2-C-methyl-D-erythritol + diphosphate. It functions in the pathway isoprenoid biosynthesis; isopentenyl diphosphate biosynthesis via DXP pathway; isopentenyl diphosphate from 1-deoxy-D-xylulose 5-phosphate: step 2/6. Functionally, catalyzes the formation of 4-diphosphocytidyl-2-C-methyl-D-erythritol from CTP and 2-C-methyl-D-erythritol 4-phosphate (MEP). The polypeptide is 2-C-methyl-D-erythritol 4-phosphate cytidylyltransferase (Dechloromonas aromatica (strain RCB)).